A 206-amino-acid chain; its full sequence is Putative 3-methyladenine DNA glycosylase (206 aa).

Belongs to the DNA glycosylase MPG family.

The chain is Putative 3-methyladenine DNA glycosylase from Staphylococcus carnosus (strain TM300).